We begin with the raw amino-acid sequence, 71 residues long: Large ribosomal subunit protein uL30 (71 aa).

Belongs to the universal ribosomal protein uL30 family. Part of the 50S ribosomal subunit.

This Borreliella burgdorferi (strain ATCC 35210 / DSM 4680 / CIP 102532 / B31) (Borrelia burgdorferi) protein is Large ribosomal subunit protein uL30.